Consider the following 967-residue polypeptide: Protein moonraker (967 aa).

The interval 178–201 (SHPGQSDLTVPNSPPTHDPGLQPH) is disordered. The span at 179 to 188 (HPGQSDLTVP) shows a compositional bias: polar residues. Phosphoserine is present on residues Ser-287 and Ser-409. Disordered regions lie at residues 401–431 (ALER…SRPS) and 490–601 (KAGK…SHLT). Residues 525–543 (QSQPHSKSRVQQTTVSSRL) are compositionally biased toward polar residues. The segment covering 557–568 (WIPPNPTSPPAS) has biased composition (pro residues). Residues 616–642 (AETSKRLKELEELKAKEIDSMQKQRLD) are a coiled coil. A phosphoserine mark is found at Ser-700 and Ser-826. Positions 849–872 (RPCNGNSLDESVGTEEGSEKREAP) are disordered. Positions 885–967 (GRAPLFVPPG…FTSEFLEAAT (83 aa)) are necessary and sufficient for CEP20-binding.

Interacts with CEP63. Interacts with WDR62. Forms a complex with OFD1 and CEP20/FOR20. Interacts with PCM1.

The protein resides in the cytoplasm. It localises to the cytoskeleton. Its subcellular location is the microtubule organizing center. It is found in the centrosome. The protein localises to the centriole. The protein resides in the centriolar satellite. Involved in centriole duplication. Positively regulates CEP63 centrosomal localization. Required for WDR62 centrosomal localization and promotes the centrosomal localization of CDK2. May play a role in cilium assembly. In Homo sapiens (Human), this protein is Protein moonraker (KIAA0753).